We begin with the raw amino-acid sequence, 411 residues long: Meiotically up-regulated gene 147 protein (411 aa).

3 disordered regions span residues 1-52 (MLAQ…FENK), 102-137 (EREE…ELAD), and 156-191 (HQHE…HYES). Residues 33–43 (TQNESNLQQSE) show a composition bias toward polar residues. A compositionally biased stretch (basic and acidic residues) spans 156-172 (HQHEDEFSSSNKDKGFT).

Its subcellular location is the cytoplasm. The protein resides in the nucleus. Functionally, has a role in meiosis. This is Meiotically up-regulated gene 147 protein (mug147) from Schizosaccharomyces pombe (strain 972 / ATCC 24843) (Fission yeast).